We begin with the raw amino-acid sequence, 552 residues long: Cation transporter HKT1;1 (552 aa).

Residues 1–70 (MHPPSLVLDT…QSYSFLVCKS (70 aa)) lie on the Cytoplasmic side of the membrane. The next 2 helical transmembrane spans lie at 71–91 (NPLVVQLVYFVIISFAGFLAL) and 133–153 (LWVLILLMLMGGEVFTSMLGL). Residues 154–221 (YFNNANANRN…TYNPCAVLVR (68 aa)) are Cytoplasmic-facing. 2 helical membrane passes run 222–242 (IVTGYFVATVISSSVIIIIYF) and 291–311 (VLLLLVIPQILAGNTLFSPLL). Residues 312-348 (RLCVWVLGKVSGKAEYAYILQHPGETGYKHLHVRRNS) lie on the Cytoplasmic side of the membrane. 2 helical membrane-spanning segments follow: residues 349 to 369 (VYIVLSVTGLILLQVMFICSF) and 402 to 422 (ILDISTLSPSTLLLFAVVMYL). Topologically, residues 423 to 448 (PSDASFLTANADNQPLTDKKTNSISR) are cytoplasmic. 2 consecutive transmembrane segments (helical) span residues 449-471 (ALWRNFTVNKLSCLAMFTFLACI) and 524-544 (GFVGRWTEEGKLIVILVMFLG). Topologically, residues 545 to 552 (RLKEFILK) are cytoplasmic.

It belongs to the TrkH potassium transport family. HKT (TC 2.A.38.3) subfamily. In terms of tissue distribution, expressed in shoots. In roots, expressed in epidermis, exodermis, cortex, and sieve elements and companion cells of phloem. In mature leaves, expressed in large highly vacuolated cells of the adaxial epidermis, phloem and xylem.

The protein localises to the membrane. The enzyme catalyses Na(+)(in) = Na(+)(out). In terms of biological role, functions as a low-affinity sodium transporter. In Oryza sativa subsp. japonica (Rice), this protein is Cation transporter HKT1;1.